Here is a 121-residue protein sequence, read N- to C-terminus: Large ribosomal subunit protein bL20 (121 aa).

This sequence belongs to the bacterial ribosomal protein bL20 family.

Functionally, binds directly to 23S ribosomal RNA and is necessary for the in vitro assembly process of the 50S ribosomal subunit. It is not involved in the protein synthesizing functions of that subunit. The chain is Large ribosomal subunit protein bL20 from Wolbachia sp. subsp. Drosophila simulans (strain wRi).